The sequence spans 185 residues: Large ribosomal subunit protein uL6m (185 aa).

The protein belongs to the universal ribosomal protein uL6 family.

The protein localises to the mitochondrion. The protein is Large ribosomal subunit protein uL6m (RPL6) of Reclinomonas americana.